The sequence spans 243 residues: 1-(5-phosphoribosyl)-5-[(5-phosphoribosylamino)methylideneamino] imidazole-4-carboxamide isomerase (243 aa).

Catalysis depends on aspartate 10, which acts as the Proton acceptor. Aspartate 128 acts as the Proton donor in catalysis.

Belongs to the HisA/HisF family.

The protein localises to the cytoplasm. It catalyses the reaction 1-(5-phospho-beta-D-ribosyl)-5-[(5-phospho-beta-D-ribosylamino)methylideneamino]imidazole-4-carboxamide = 5-[(5-phospho-1-deoxy-D-ribulos-1-ylimino)methylamino]-1-(5-phospho-beta-D-ribosyl)imidazole-4-carboxamide. The protein operates within amino-acid biosynthesis; L-histidine biosynthesis; L-histidine from 5-phospho-alpha-D-ribose 1-diphosphate: step 4/9. The polypeptide is 1-(5-phosphoribosyl)-5-[(5-phosphoribosylamino)methylideneamino] imidazole-4-carboxamide isomerase (Helicobacter hepaticus (strain ATCC 51449 / 3B1)).